A 631-amino-acid polypeptide reads, in one-letter code: tRNA uridine 5-carboxymethylaminomethyl modification enzyme MnmG (631 aa).

Residues 13 to 18 (GGGHAG), Val125, and Ser180 each bind FAD. Residue 273–287 (GPRYCPSIEDKVMRF) coordinates NAD(+). FAD is bound at residue Gln370.

Belongs to the MnmG family. As to quaternary structure, homodimer. Heterotetramer of two MnmE and two MnmG subunits. FAD is required as a cofactor.

It localises to the cytoplasm. NAD-binding protein involved in the addition of a carboxymethylaminomethyl (cmnm) group at the wobble position (U34) of certain tRNAs, forming tRNA-cmnm(5)s(2)U34. The chain is tRNA uridine 5-carboxymethylaminomethyl modification enzyme MnmG from Vibrio atlanticus (strain LGP32) (Vibrio splendidus (strain Mel32)).